A 499-amino-acid polypeptide reads, in one-letter code: Probable cytochrome P450 cyp-35D1 (499 aa).

Cys444 contributes to the heme binding site.

This sequence belongs to the cytochrome P450 family. Heme is required as a cofactor. In terms of tissue distribution, expressed in hypodermis, intestine and vulva upon thiabendazole (TBZ) exposure.

Functionally, cytochromes P450 are a group of heme-thiolate monooxygenases. They oxidize a variety of structurally unrelated compounds, including steroids, fatty acids, and xenobiotics. Involved in the oxidative metabolism of thiabendazole (TBZ). Catalyzes the conversion of TBZ to its hydroxylated form. This Caenorhabditis elegans protein is Probable cytochrome P450 cyp-35D1.